A 160-amino-acid chain; its full sequence is Protein-export protein SecB (160 aa).

Belongs to the SecB family. As to quaternary structure, homotetramer, a dimer of dimers. One homotetramer interacts with 1 SecA dimer.

It is found in the cytoplasm. Its function is as follows. One of the proteins required for the normal export of preproteins out of the cell cytoplasm. It is a molecular chaperone that binds to a subset of precursor proteins, maintaining them in a translocation-competent state. It also specifically binds to its receptor SecA. The sequence is that of Protein-export protein SecB from Azorhizobium caulinodans (strain ATCC 43989 / DSM 5975 / JCM 20966 / LMG 6465 / NBRC 14845 / NCIMB 13405 / ORS 571).